A 769-amino-acid chain; its full sequence is Serine/threonine-protein kinase PLK4 (769 aa).

The Protein kinase domain maps to 14–267 (YEVQHLLGKG…LEAVLCHPFM (254 aa)). ATP contacts are provided by residues 20–28 (LGKGGFATV) and Lys-43. Asp-138 (proton acceptor) is an active-site residue. The Cryptic POLO box 1 (CPB1) domain occupies 381 to 498 (EDRISVPPLN…ARFVGLVKSK (118 aa)). One can recognise a Cryptic POLO box 2 (CPB2) domain in the interval 499 to 602 (TPKVTYFSTL…GRRPITDVQP (104 aa)). A POLO box domain is found at 660–739 (PIKRINVPDI…IPNIQLKLKT (80 aa)).

This sequence belongs to the protein kinase superfamily. Ser/Thr protein kinase family. CDC5/Polo subfamily. Homodimer. Post-translationally, ubiquitinated by the SCF(Slimb) ubiquitin ligase complex; leading to its degradation by the proteasome during interphase and regulating centriole number and ensuring the block to centriole reduplication.

It localises to the cytoplasm. It is found in the cytoskeleton. The protein resides in the microtubule organizing center. Its subcellular location is the centrosome. The protein localises to the centriole. The catalysed reaction is L-seryl-[protein] + ATP = O-phospho-L-seryl-[protein] + ADP + H(+). It catalyses the reaction L-threonyl-[protein] + ATP = O-phospho-L-threonyl-[protein] + ADP + H(+). Functionally, serine/threonine-protein kinase that plays a central role in centriole duplication. Able to trigger procentriole formation on the surface of the mother centriole cylinder, using mother centriole as a platform, leading to the recruitment of centriole biogenesis proteins such as sas-6. When overexpressed, it is able to induce centrosome amplification through the simultaneous generation of multiple procentrioles adjoining each parental centriole during S phase. Centrosome amplification following overexpression can initiate tumorigenesis, highlighting the importance of centrosome regulation in cancers. In Drosophila sechellia (Fruit fly), this protein is Serine/threonine-protein kinase PLK4 (SAK).